The primary structure comprises 138 residues: MARLTVEECMGRTNNKFKLVILASQRAHDLNSGACPVIKHKNGKNTVIALKEIAAKQLDVSSLFNLSVQRCRKYMEKFINSDEQCVTNKSKIDIFQQNAITSSFNELGNNSNNQGSNLLGRDNFFSTPENRNTSNTDS.

A disordered region spans residues Asn-117 to Ser-138. Positions Phe-124–Ser-138 are enriched in polar residues.

The protein belongs to the RNA polymerase subunit omega family. As to quaternary structure, the RNAP catalytic core consists of 2 alpha, 1 beta, 1 beta' and 1 omega subunit. When a sigma factor is associated with the core the holoenzyme is formed, which can initiate transcription.

The catalysed reaction is RNA(n) + a ribonucleoside 5'-triphosphate = RNA(n+1) + diphosphate. Promotes RNA polymerase assembly. Latches the N- and C-terminal regions of the beta' subunit thereby facilitating its interaction with the beta and alpha subunits. In Ehrlichia canis (strain Jake), this protein is DNA-directed RNA polymerase subunit omega.